Reading from the N-terminus, the 465-residue chain is Phosphatidylserine synthase 1 (465 aa).

Residues 1 to 35 (MVSAMRSRTLSKDDVNYKMHFRMINEQQVEDITID) are Cytoplasmic-facing. A helical membrane pass occupies residues 36–56 (FFYKPHTITLLTFTTVSLMYF). At 57–68 (AFTRENTSQEDN) the chain is on the lumenal side. A helical transmembrane segment spans residues 69–89 (IWKGILSVIFFFLIISVLAFP). The Cytoplasmic portion of the chain corresponds to 90–102 (NGPFTRPHPAIWR). Residues 103–123 (MVFGLSVLYFLFLVFLLFLNV) form a helical membrane-spanning segment. At 124–186 (EQVKAVMYWL…AMKALLIRSY (63 aa)) the chain is on the lumenal side. Residues 187–207 (GLCWTISITWEMTELFFMHLL) traverse the membrane as a helical segment. Topologically, residues 208 to 216 (PNFAECWWD) are cytoplasmic. Residues 217–237 (QVILDILLCNGGGILLGMVVC) form a helical membrane-spanning segment. Residues 238-286 (RFLEMRTYHWASFKDIHTTTGKIKRAVLQFTPASWIYVRWFDPKSSFQR) are Lumenal-facing. The chain crosses the membrane as a helical span at residues 287 to 307 (VAGVYLFMIIWQLTELNTFFL). The Cytoplasmic segment spans residues 308 to 319 (KHIFVFQASHPL). A helical transmembrane segment spans residues 320-342 (SWCRILFIGIITAPTVRQYYAYL). At 343-355 (TDTQCKRVGTQCW) the chain is on the lumenal side. The chain crosses the membrane as a helical span at residues 356 to 376 (VFGAIAFLEATVCIKFGQDLF). The Cytoplasmic segment spans residues 377 to 383 (SKTHLLY). The helical transmembrane segment at 384 to 404 (VFLWLFSVAVITFLCLYGMVW) threads the bilayer. Residues 405-465 (YADYCGQREK…GKVTNGVGKK (61 aa)) are Lumenal-facing. The segment at 440–465 (PVKQNEGTSRRKNRHKGKVTNGVGKK) is disordered. Over residues 449-465 (RRKNRHKGKVTNGVGKK) the composition is skewed to basic residues.

It belongs to the phosphatidyl serine synthase family.

Its subcellular location is the endoplasmic reticulum membrane. It catalyses the reaction a 1,2-diacyl-sn-glycero-3-phosphoethanolamine + L-serine = a 1,2-diacyl-sn-glycero-3-phospho-L-serine + ethanolamine. The enzyme catalyses a 1,2-diacyl-sn-glycero-3-phosphocholine + L-serine = a 1,2-diacyl-sn-glycero-3-phospho-L-serine + choline. The protein operates within phospholipid metabolism; phosphatidylserine biosynthesis. Catalyzes a base-exchange reaction in which the polar head group of phosphatidylethanolamine (PE) or phosphatidylcholine (PC) is replaced by L-serine. Catalyzes mainly the conversion of phosphatidylcholine but also converts, in vitro and to a lesser extent, phosphatidylethanolamine. This Xenopus tropicalis (Western clawed frog) protein is Phosphatidylserine synthase 1 (ptdss1).